The primary structure comprises 144 residues: Nucleoside diphosphate kinase (144 aa).

The ATP site is built by Lys9, Phe57, Arg85, Thr91, Arg102, and Asn112. His115 serves as the catalytic Pros-phosphohistidine intermediate.

This sequence belongs to the NDK family. Homotetramer. Requires Mg(2+) as cofactor.

It localises to the cytoplasm. It carries out the reaction a 2'-deoxyribonucleoside 5'-diphosphate + ATP = a 2'-deoxyribonucleoside 5'-triphosphate + ADP. It catalyses the reaction a ribonucleoside 5'-diphosphate + ATP = a ribonucleoside 5'-triphosphate + ADP. Functionally, major role in the synthesis of nucleoside triphosphates other than ATP. The ATP gamma phosphate is transferred to the NDP beta phosphate via a ping-pong mechanism, using a phosphorylated active-site intermediate. The chain is Nucleoside diphosphate kinase from Chlamydia pneumoniae (Chlamydophila pneumoniae).